The following is a 270-amino-acid chain: MTTTHPSGFAPAASPLAPTMIHTPDGAISAGITSIPSQGDDMPAYYARPKASDGALPVVIVVQEIFGVHEHIRDICRRLALEGYLAIAPELYFREGDPNDFADIPTLLSGLVAKVPDSQVLADLDHVASWASRNGGDAHRLMITGFCWGGRITWLYAAHNPQLKAAVAWYGKLVGDTSLNSPKHPVDIATDLNAPVLGLYGGQDTSIPQESVETMRQALRAANAKAEIVVYPDAGHAFNADYRPGYHEASAKDGWQRMLEWFAQYGGKKG.

Active-site residues include cysteine 147, aspartate 204, and histidine 236.

Belongs to the dienelactone hydrolase family.

It carries out the reaction 2-(5-oxo-2,5-dihydrofuran-2-ylidene)acetate + H2O = 4-oxohex-2-enedioate + H(+). This Salmonella typhimurium (strain LT2 / SGSC1412 / ATCC 700720) protein is Putative carboxymethylenebutenolidase (ysgA).